The primary structure comprises 463 residues: Probable Xaa-Pro aminopeptidase pepP (463 aa).

Residues D259, D270, E393, and E433 each coordinate Mn(2+).

This sequence belongs to the peptidase M24B family. Requires Mn(2+) as cofactor.

The enzyme catalyses Release of any N-terminal amino acid, including proline, that is linked to proline, even from a dipeptide or tripeptide.. Its function is as follows. Catalyzes the removal of a penultimate prolyl residue from the N-termini of peptides. This Pyrenophora tritici-repentis (strain Pt-1C-BFP) (Wheat tan spot fungus) protein is Probable Xaa-Pro aminopeptidase pepP (pepP).